A 308-amino-acid chain; its full sequence is Glucan 1,3-beta-glucosidase (308 aa).

Residues 1 to 18 (MQIKFLTTLATVLTSVAA) form the signal peptide. Catalysis depends on Glu-119, which acts as the Proton donor. Asn-197 carries an N-linked (GlcNAc...) asparagine glycan. The active-site Nucleophile is Glu-228.

The protein belongs to the glycosyl hydrolase 17 family.

The protein resides in the secreted. The protein localises to the cell wall. The catalysed reaction is Successive hydrolysis of beta-D-glucose units from the non-reducing ends of (1-&gt;3)-beta-D-glucans, releasing alpha-glucose.. The sequence is that of Glucan 1,3-beta-glucosidase (BGL2) from Candida albicans (Yeast).